A 533-amino-acid chain; its full sequence is Acyl-CoA-binding domain-containing protein 5 (533 aa).

The ACB domain occupies histidine 42–methionine 131. Residues isoleucine 53–phenylalanine 62, tyrosine 73–lysine 77, lysine 99, and tyrosine 118 each bind an acyl-CoA. The segment at threonine 182–alanine 227 is disordered. Serine 194, serine 195, serine 197, and serine 201 each carry phosphoserine. A compositionally biased stretch (basic and acidic residues) spans glutamate 208–alanine 227. 2 positions are modified to phosphoserine: serine 244 and serine 314. Positions glycine 339–arginine 443 are disordered. A compositionally biased stretch (basic and acidic residues) spans glycine 374–glutamate 383. A Phosphoserine modification is found at serine 429. Basic and acidic residues predominate over residues aspartate 432–serine 442. The stretch at glutamate 448 to glutamine 478 forms a coiled coil. Lysine 470 is modified (N6-acetyllysine). A helical membrane pass occupies residues serine 503 to tyrosine 525.

Belongs to the ATG37 family. Highly expressed in brain and liver. Lower levels of expression in spleen and heart.

The protein resides in the peroxisome membrane. Its function is as follows. Acyl-CoA binding protein which acts as the peroxisome receptor for pexophagy but is dispensable for aggrephagy and nonselective autophagy. Binds medium- and long-chain acyl-CoA esters. This is Acyl-CoA-binding domain-containing protein 5 (ACBD5) from Bos taurus (Bovine).